Here is a 456-residue protein sequence, read N- to C-terminus: MRSDWIAPRRGQANVTQMHYARQGVITEEMDFVARRENLPADLIRDEVARGRMIIPANINHTNLEPMAIGIASKCKVNANIGASPNASNIDEEVEKLKLAVKYGADTVMDLSTGGGNLDEIRTAIINASPVPIGTVPVYQALESVHGRIEKLSADDFLHVIEKHCEQGVDYQTIHAGLLIEHLPKVKSRITGIVSRGGGIIAQWMLYHHKQNPLYTHFRDIIEIFKRYDCSFSLGDSLRPGCLHDASDDAQLSELKTLGQLTRVAWEHDVQVMVEGPGHVPMDQIEFNVRKQMEECSEAPFYVLGPLVTDIAPGYDHITSAIGAAMAGWYGTAMLCYVTPKEHLGLPNAEDVRNGLIAYKIAAHAADIARHRPGARDRDDELSRARYAFDWNKQFDLSLDPERAREYHDETLPADIYKTAEFCSMCGPKHCPMQTKITEEDLTELEKFLEKDSALA.

Residues asparagine 80, methionine 109, tyrosine 139, histidine 175, 195-197 (SRG), 236-239 (DSLR), and glutamate 275 each bind substrate. Histidine 279 contributes to the Zn(2+) binding site. Residue tyrosine 302 participates in substrate binding. Histidine 343 contacts Zn(2+). [4Fe-4S] cluster is bound by residues cysteine 423, cysteine 426, and cysteine 431.

It belongs to the ThiC family. The cofactor is [4Fe-4S] cluster.

It catalyses the reaction 5-amino-1-(5-phospho-beta-D-ribosyl)imidazole + S-adenosyl-L-methionine = 4-amino-2-methyl-5-(phosphooxymethyl)pyrimidine + CO + 5'-deoxyadenosine + formate + L-methionine + 3 H(+). It functions in the pathway cofactor biosynthesis; thiamine diphosphate biosynthesis. In terms of biological role, catalyzes the synthesis of the hydroxymethylpyrimidine phosphate (HMP-P) moiety of thiamine from aminoimidazole ribotide (AIR) in a radical S-adenosyl-L-methionine (SAM)-dependent reaction. This is Phosphomethylpyrimidine synthase from Synechococcus elongatus (strain ATCC 33912 / PCC 7942 / FACHB-805) (Anacystis nidulans R2).